A 269-amino-acid polypeptide reads, in one-letter code: MFPLDNSRRFLWLLVLLFGCFLPCLADLKVLVRLEDGQLTEENLQADSDKDFITLEFRKTDGTFVTYLADFKQDVKIFHVLILGELERGQSQFQALCFVTRLQSNEIIPSESMAKLRQKNPHAVRQAEEMRGTDTLQMDVAINFTKGVQLTPHIHNICAEAKEAIYTRQEDVRLWLERGIDGSMFEVLPQPSSIPSLHPCKLCPQDWKPCICSYHLSLEWIPCSLKYCKNRDSSVKTTSYRCGIRSCQKAFTFHFYVAQKQLCLWDEET.

A signal peptide spans methionine 1–alanine 26.

It belongs to the OAF family.

The polypeptide is Out at first protein homolog (oaf) (Xenopus laevis (African clawed frog)).